The primary structure comprises 508 residues: Protein FAM217A (508 aa).

It belongs to the FAM217 family.

The chain is Protein FAM217A (FAM217A) from Homo sapiens (Human).